The following is a 282-amino-acid chain: Shikimate dehydrogenase (NADP(+)) (282 aa).

Residues 15 to 17 and Thr62 each bind shikimate; that span reads SKS. Lys66 acts as the Proton acceptor in catalysis. Residues Asn87 and Asp103 each contribute to the shikimate site. NADP(+) is bound by residues 127-131, 151-156, and Met220; these read GAGGA and NRTHTK. Residue Tyr222 participates in shikimate binding. Gly244 is a binding site for NADP(+).

Belongs to the shikimate dehydrogenase family. As to quaternary structure, homodimer.

It carries out the reaction shikimate + NADP(+) = 3-dehydroshikimate + NADPH + H(+). Its pathway is metabolic intermediate biosynthesis; chorismate biosynthesis; chorismate from D-erythrose 4-phosphate and phosphoenolpyruvate: step 4/7. In terms of biological role, involved in the biosynthesis of the chorismate, which leads to the biosynthesis of aromatic amino acids. Catalyzes the reversible NADPH linked reduction of 3-dehydroshikimate (DHSA) to yield shikimate (SA). This is Shikimate dehydrogenase (NADP(+)) from Shewanella baltica (strain OS185).